The primary structure comprises 158 residues: SsrA-binding protein (158 aa).

The disordered stretch occupies residues Lys134 to Gly158. The segment covering Asp137–Arg149 has biased composition (basic and acidic residues).

It belongs to the SmpB family.

It is found in the cytoplasm. In terms of biological role, required for rescue of stalled ribosomes mediated by trans-translation. Binds to transfer-messenger RNA (tmRNA), required for stable association of tmRNA with ribosomes. tmRNA and SmpB together mimic tRNA shape, replacing the anticodon stem-loop with SmpB. tmRNA is encoded by the ssrA gene; the 2 termini fold to resemble tRNA(Ala) and it encodes a 'tag peptide', a short internal open reading frame. During trans-translation Ala-aminoacylated tmRNA acts like a tRNA, entering the A-site of stalled ribosomes, displacing the stalled mRNA. The ribosome then switches to translate the ORF on the tmRNA; the nascent peptide is terminated with the 'tag peptide' encoded by the tmRNA and targeted for degradation. The ribosome is freed to recommence translation, which seems to be the essential function of trans-translation. The protein is SsrA-binding protein of Allorhizobium ampelinum (strain ATCC BAA-846 / DSM 112012 / S4) (Agrobacterium vitis (strain S4)).